Here is a 521-residue protein sequence, read N- to C-terminus: GRAS family protein RAD1 (521 aa).

One can recognise a GRAS domain in the interval 137 to 520 (DGSCADGMRL…KPIVAVSCWK (384 aa)). The tract at residues 144 to 212 (MRLVQLLIAC…PIGNNSAGSD (69 aa)) is leucine repeat I (LRI). Positions 231–301 (FKLVYENCPH…HRVRRLRITA (71 aa)) are VHIID. The VHIID signature appears at 262 to 266 (LHVVD). Residues 311–343 (VIGEELSIYAKNLGIHLEFSIVEKNLENLKPKD) are leucine repeat II (LRII). The PFYRE stretch occupies residues 352-443 (LVVNSILQLH…QFYFAEEIKN (92 aa)). The interval 446–520 (SCEGPLRMER…KPIVAVSCWK (75 aa)) is SAW.

The protein belongs to the GRAS family. In terms of assembly, interacts with RAM1. Interacts with NSP2.

It is found in the nucleus. Its function is as follows. Transcription factor acting as a regulator of arbuscular mycorrhiza (AM)-related genes (e.g. STR). Required for the morphogenesis of arbuscules upon symbiosis with AM fungi (e.g. Glomus versiforme). Also involved in restricting mycorrhizal colonization of the root meristem. The protein is GRAS family protein RAD1 of Medicago truncatula (Barrel medic).